The following is a 396-amino-acid chain: Elongation factor Tu (396 aa).

The tr-type G domain occupies 10-206 (KPHCNIGTIG…QVDAYIPQPE (197 aa)). Residues 19-26 (GHVDHGKT) are G1. A GTP-binding site is contributed by 19–26 (GHVDHGKT). T26 contacts Mg(2+). The tract at residues 60-64 (GITIS) is G2. The G3 stretch occupies residues 81 to 84 (DCPG). Residues 81 to 85 (DCPGH) and 136 to 139 (NKVD) contribute to the GTP site. The segment at 136–139 (NKVD) is G4. Positions 174 to 176 (SAL) are G5.

The protein belongs to the TRAFAC class translation factor GTPase superfamily. Classic translation factor GTPase family. EF-Tu/EF-1A subfamily. Monomer.

It is found in the cytoplasm. It catalyses the reaction GTP + H2O = GDP + phosphate + H(+). In terms of biological role, GTP hydrolase that promotes the GTP-dependent binding of aminoacyl-tRNA to the A-site of ribosomes during protein biosynthesis. This chain is Elongation factor Tu, found in Gluconobacter oxydans (strain 621H) (Gluconobacter suboxydans).